The sequence spans 65 residues: Large ribosomal subunit protein bL35 (65 aa).

The protein belongs to the bacterial ribosomal protein bL35 family.

This is Large ribosomal subunit protein bL35 from Chromobacterium violaceum (strain ATCC 12472 / DSM 30191 / JCM 1249 / CCUG 213 / NBRC 12614 / NCIMB 9131 / NCTC 9757 / MK).